Here is a 279-residue protein sequence, read N- to C-terminus: NH(3)-dependent NAD(+) synthetase (279 aa).

Position 46–53 (46–53 (GISGGQDS)) interacts with ATP. Mg(2+) is bound at residue Asp52. Arg145 contributes to the deamido-NAD(+) binding site. Thr165 provides a ligand contact to ATP. Mg(2+) is bound at residue Glu170. Positions 178 and 185 each coordinate deamido-NAD(+). ATP contacts are provided by Lys194 and Thr216. Residue 265-266 (HK) coordinates deamido-NAD(+).

The protein belongs to the NAD synthetase family. As to quaternary structure, homodimer.

The enzyme catalyses deamido-NAD(+) + NH4(+) + ATP = AMP + diphosphate + NAD(+) + H(+). Its pathway is cofactor biosynthesis; NAD(+) biosynthesis; NAD(+) from deamido-NAD(+) (ammonia route): step 1/1. Its function is as follows. Catalyzes the ATP-dependent amidation of deamido-NAD to form NAD. Uses ammonia as a nitrogen source. The chain is NH(3)-dependent NAD(+) synthetase from Rhodococcus jostii (strain RHA1).